The following is a 496-amino-acid chain: Xylulose kinase (496 aa).

Position 83 to 84 (83 to 84 (MH)) interacts with substrate. Asp237 serves as the catalytic Proton acceptor.

This sequence belongs to the FGGY kinase family.

The enzyme catalyses D-xylulose + ATP = D-xylulose 5-phosphate + ADP + H(+). Its function is as follows. Catalyzes the phosphorylation of D-xylulose to D-xylulose 5-phosphate. The protein is Xylulose kinase of Staphylococcus epidermidis (strain ATCC 35984 / DSM 28319 / BCRC 17069 / CCUG 31568 / BM 3577 / RP62A).